Consider the following 317-residue polypeptide: Transaldolase (317 aa).

The Schiff-base intermediate with substrate role is filled by Lys-126.

It belongs to the transaldolase family. Type 1 subfamily. Homodimer.

It is found in the cytoplasm. It carries out the reaction D-sedoheptulose 7-phosphate + D-glyceraldehyde 3-phosphate = D-erythrose 4-phosphate + beta-D-fructose 6-phosphate. It participates in carbohydrate degradation; pentose phosphate pathway; D-glyceraldehyde 3-phosphate and beta-D-fructose 6-phosphate from D-ribose 5-phosphate and D-xylulose 5-phosphate (non-oxidative stage): step 2/3. Transaldolase is important for the balance of metabolites in the pentose-phosphate pathway. The sequence is that of Transaldolase from Burkholderia orbicola (strain AU 1054).